A 222-amino-acid polypeptide reads, in one-letter code: MELTLHEARVIGCLLEKEVTTPEQYPLSLNALTLACNQKTSRDPVLDLSEAKVQDALDSLNKKRLISEQSGFGSRVVKYKHRFCNTEFSELQLSNAAVAIVCLLLLRGPQTPGELRTRSNRLHDFKDVLEVEACIKQLMERDKPVLAQLPREPGKRECRYTELFSQGAEQINAASLSADSPSADSNSLNAQDRQQLEARVTQLEEQVAKLKDKLDSLIASLS.

The protein belongs to the UPF0502 family.

The protein is UPF0502 protein Shewmr7_1629 of Shewanella sp. (strain MR-7).